Here is a 503-residue protein sequence, read N- to C-terminus: Maturase K (503 aa).

This sequence belongs to the intron maturase 2 family. MatK subfamily.

The protein localises to the plastid. It localises to the chloroplast. Functionally, usually encoded in the trnK tRNA gene intron. Probably assists in splicing its own and other chloroplast group II introns. This Syzygium anisatum (Aniseed myrtle) protein is Maturase K.